The sequence spans 388 residues: Succinate--CoA ligase [ADP-forming] subunit beta (388 aa).

One can recognise an ATP-grasp domain in the interval Lys9–Gln244. Residues Lys46, Gly53 to Gly55, Glu99, Thr102, and Glu107 each bind ATP. 2 residues coordinate Mg(2+): Asn199 and Asp213. Substrate-binding positions include Asn264 and Gly321–Val323.

It belongs to the succinate/malate CoA ligase beta subunit family. As to quaternary structure, heterotetramer of two alpha and two beta subunits. The cofactor is Mg(2+).

The enzyme catalyses succinate + ATP + CoA = succinyl-CoA + ADP + phosphate. It catalyses the reaction GTP + succinate + CoA = succinyl-CoA + GDP + phosphate. It functions in the pathway carbohydrate metabolism; tricarboxylic acid cycle; succinate from succinyl-CoA (ligase route): step 1/1. In terms of biological role, succinyl-CoA synthetase functions in the citric acid cycle (TCA), coupling the hydrolysis of succinyl-CoA to the synthesis of either ATP or GTP and thus represents the only step of substrate-level phosphorylation in the TCA. The beta subunit provides nucleotide specificity of the enzyme and binds the substrate succinate, while the binding sites for coenzyme A and phosphate are found in the alpha subunit. This Klebsiella pneumoniae (strain 342) protein is Succinate--CoA ligase [ADP-forming] subunit beta.